The sequence spans 156 residues: Mitochondrial translation release factor in rescue (156 aa).

The tract at residues 44-108 (EEELEEQFVR…LREKLEVAYK (65 aa)) is GGQ domain. The short motif at 58-60 (GGQ) is the GGQ element. The stretch at 100 to 141 (REKLEVAYKGEESELLKMKKESMQKKQDKRRKVNENIEKKRR) forms a coiled coil. 2 stretches are compositionally biased toward basic and acidic residues: residues 114-125 (LLKMKKESMQKK) and 132-156 (VNENIEKKRRFKEMLNSKQEDDKST). Positions 114 to 156 (LLKMKKESMQKKQDKRRKVNENIEKKRRFKEMLNSKQEDDKST) are disordered.

It belongs to the prokaryotic/mitochondrial release factor family. Interacts (via C-terminus) with MTRES1 (via S4 domain). Associates with mitoribosomal S39 large subunit, peptidyl tRNA and nascent chain.

The protein resides in the mitochondrion. Functionally, part of a mitoribosome-associated quality control pathway that prevents aberrant translation by responding to interruptions during elongation. As heterodimer with MTRES1, ejects the unfinished nascent chain and peptidyl transfer RNA (tRNA), respectively, from stalled ribosomes. Recruitment of mitoribosome biogenesis factors to these quality control intermediates suggests additional roles for MTRES1 and MTRF during mitoribosome rescue. The chain is Mitochondrial translation release factor in rescue (mtrfr) from Danio rerio (Zebrafish).